We begin with the raw amino-acid sequence, 111 residues long: Large ribosomal subunit protein bL21 (111 aa).

It belongs to the bacterial ribosomal protein bL21 family. As to quaternary structure, part of the 50S ribosomal subunit. Contacts protein L20.

Functionally, this protein binds to 23S rRNA in the presence of protein L20. The polypeptide is Large ribosomal subunit protein bL21 (Thermosynechococcus vestitus (strain NIES-2133 / IAM M-273 / BP-1)).